Here is a 473-residue protein sequence, read N- to C-terminus: Probable glucose-6-phosphate 1-dehydrogenase C7.13c (473 aa).

The NADP(+) site is built by Arg-43, Tyr-121, and Lys-144. D-glucose 6-phosphate contacts are provided by residues Lys-144, 174 to 178 (HYTAK), Glu-213, and Asp-232. Catalysis depends on His-237, which acts as the Proton acceptor. Position 331 (Lys-331) interacts with D-glucose 6-phosphate. Lys-341 lines the NADP(+) pocket. Gln-366 is a binding site for D-glucose 6-phosphate.

The protein belongs to the glucose-6-phosphate dehydrogenase family.

The protein localises to the cytoplasm. It carries out the reaction D-glucose 6-phosphate + NADP(+) = 6-phospho-D-glucono-1,5-lactone + NADPH + H(+). The protein operates within carbohydrate degradation; pentose phosphate pathway; D-ribulose 5-phosphate from D-glucose 6-phosphate (oxidative stage): step 1/3. In terms of biological role, catalyzes the rate-limiting step of the oxidative pentose-phosphate pathway, which represents a route for the dissimilation of carbohydrates besides glycolysis. The main function of this enzyme is to provide reducing power (NADPH) and pentose phosphates for fatty acid and nucleic acid synthesis. This chain is Probable glucose-6-phosphate 1-dehydrogenase C7.13c, found in Schizosaccharomyces pombe (strain 972 / ATCC 24843) (Fission yeast).